Reading from the N-terminus, the 493-residue chain is 3-octaprenyl-4-hydroxybenzoate carboxy-lyase (493 aa).

Mn(2+) is bound at residue N172. Prenylated FMN-binding positions include 175 to 177, 189 to 191, and 194 to 195; these read IYR, RWL, and RG. Residue E238 coordinates Mn(2+). D287 acts as the Proton donor in catalysis.

The protein belongs to the UbiD family. In terms of assembly, homohexamer. Requires prenylated FMN as cofactor. Mn(2+) is required as a cofactor.

Its subcellular location is the cell membrane. It carries out the reaction a 4-hydroxy-3-(all-trans-polyprenyl)benzoate + H(+) = a 2-(all-trans-polyprenyl)phenol + CO2. It participates in cofactor biosynthesis; ubiquinone biosynthesis. In terms of biological role, catalyzes the decarboxylation of 3-octaprenyl-4-hydroxy benzoate to 2-octaprenylphenol, an intermediate step in ubiquinone biosynthesis. This Shewanella loihica (strain ATCC BAA-1088 / PV-4) protein is 3-octaprenyl-4-hydroxybenzoate carboxy-lyase.